Consider the following 230-residue polypeptide: 2,3-bisphosphoglycerate-dependent phosphoglycerate mutase (230 aa).

Substrate contacts are provided by residues 8–15 (RHGESEWN), 21–22 (TG), Arg60, 87–90 (ERHY), Lys98, 114–115 (RR), and 183–184 (GN). His9 acts as the Tele-phosphohistidine intermediate in catalysis. Glu87 acts as the Proton donor/acceptor in catalysis.

It belongs to the phosphoglycerate mutase family. BPG-dependent PGAM subfamily.

It catalyses the reaction (2R)-2-phosphoglycerate = (2R)-3-phosphoglycerate. The protein operates within carbohydrate degradation; glycolysis; pyruvate from D-glyceraldehyde 3-phosphate: step 3/5. In terms of biological role, catalyzes the interconversion of 2-phosphoglycerate and 3-phosphoglycerate. In Streptococcus pneumoniae (strain ATCC BAA-255 / R6), this protein is 2,3-bisphosphoglycerate-dependent phosphoglycerate mutase.